We begin with the raw amino-acid sequence, 152 residues long: Putative pre-16S rRNA nuclease (152 aa).

It belongs to the YqgF nuclease family.

It is found in the cytoplasm. Functionally, could be a nuclease involved in processing of the 5'-end of pre-16S rRNA. This Bifidobacterium longum (strain DJO10A) protein is Putative pre-16S rRNA nuclease.